Consider the following 534-residue polypeptide: Coiled-coil domain-containing protein 183 (534 aa).

Coiled coils occupy residues 10 to 54, 136 to 209, and 323 to 396; these read EEQT…NIRR, DASK…DMKI, and LAQR…HSNM.

The sequence is that of Coiled-coil domain-containing protein 183 (CCDC183) from Homo sapiens (Human).